Here is a 73-residue protein sequence, read N- to C-terminus: DNA-directed RNA polymerase subunit omega (73 aa).

The protein belongs to the RNA polymerase subunit omega family. In cyanobacteria the RNAP catalytic core is composed of 2 alpha, 1 beta, 1 beta', 1 gamma and 1 omega subunit. When a sigma factor is associated with the core the holoenzyme is formed, which can initiate transcription.

The catalysed reaction is RNA(n) + a ribonucleoside 5'-triphosphate = RNA(n+1) + diphosphate. Its function is as follows. Promotes RNA polymerase assembly. Latches the N- and C-terminal regions of the beta' subunit thereby facilitating its interaction with the beta and alpha subunits. The protein is DNA-directed RNA polymerase subunit omega of Gloeobacter violaceus (strain ATCC 29082 / PCC 7421).